A 525-amino-acid chain; its full sequence is Chromosomal replication initiator protein DnaA (525 aa).

Residues 1–71 (MNDFWQHCSA…ADLAREFWNT (71 aa)) form a domain I, interacts with DnaA modulators region. Residues 71–188 (TPIEVQFVLD…AEADSMYERS (118 aa)) form a domain II region. Residues 160 to 181 (AAAGRRTWRPGPGAAPANGAEA) form a disordered region. A compositionally biased stretch (low complexity) spans 169 to 181 (PGPGAAPANGAEA). The domain III, AAA+ region stretch occupies residues 189-405 (KLNPVLTFDN…GALRKILAYS (217 aa)). Residues Gly233, Gly235, Lys236, and Thr237 each contribute to the ATP site. The tract at residues 406–525 (KFHGREISIE…LHVLEQTLKG (120 aa)) is domain IV, binds dsDNA.

It belongs to the DnaA family. In terms of assembly, oligomerizes as a right-handed, spiral filament on DNA at oriC.

The protein resides in the cytoplasm. Its function is as follows. Plays an essential role in the initiation and regulation of chromosomal replication. ATP-DnaA binds to the origin of replication (oriC) to initiate formation of the DNA replication initiation complex once per cell cycle. Binds the DnaA box (a 9 base pair repeat at the origin) and separates the double-stranded (ds)DNA. Forms a right-handed helical filament on oriC DNA; dsDNA binds to the exterior of the filament while single-stranded (ss)DNA is stabiized in the filament's interior. The ATP-DnaA-oriC complex binds and stabilizes one strand of the AT-rich DNA unwinding element (DUE), permitting loading of DNA polymerase. After initiation quickly degrades to an ADP-DnaA complex that is not apt for DNA replication. Binds acidic phospholipids. The chain is Chromosomal replication initiator protein DnaA from Burkholderia vietnamiensis (strain G4 / LMG 22486) (Burkholderia cepacia (strain R1808)).